A 116-amino-acid polypeptide reads, in one-letter code: Putative membrane protein insertion efficiency factor (116 aa).

It belongs to the UPF0161 family.

It localises to the cell inner membrane. Could be involved in insertion of integral membrane proteins into the membrane. The chain is Putative membrane protein insertion efficiency factor from Bartonella tribocorum (strain CIP 105476 / IBS 506).